Here is a 51-residue protein sequence, read N- to C-terminus: Ribosomal protein eL39-like 2 (51 aa).

It belongs to the eukaryotic ribosomal protein eL39 family. Component of a male germ cell-specific 60S large ribosomal subunit (LSU), which contains RPL10L and RPL39L, instead of RPL10 and RPL39 paralogs. The composition of the rest of the complex is similar to classical ribosomes. Testis specific.

It is found in the cytoplasm. Functionally, male germ cell-specific component of the ribosome, which is required for the formation of sperm and male fertility. Replaces the RPL39 paralog in the ribosome of male germ cells. The ribosome is a large ribonucleoprotein complex responsible for the synthesis of proteins in the cell. The male germ cell-specific ribosome displays a ribosomal polypeptide exit tunnel of distinct size and charge states compared with the classical ribosome. It is responsible for regulating the biosynthesis and folding of a subset of male germ-cell-specific proteins that are essential for the formation of sperm. The sequence is that of Ribosomal protein eL39-like 2 from Homo sapiens (Human).